An 85-amino-acid chain; its full sequence is Sodium channel neurotoxin MeuNaTxalpha-1 (85 aa).

The first 19 residues, 1-19 (MNSLVMISLALLVMTGVES), serve as a signal peptide directing secretion. In terms of domain architecture, LCN-type CS-alpha/beta spans 21 to 83 (RDGYIADDKN…VPIKVSGKCN (63 aa)). Residues 27–31 (DDKNC) are specificity module, loop 1. Disulfide bonds link Cys31-Cys82, Cys35-Cys55, Cys41-Cys65, and Cys45-Cys67. Specificity module, loop regions lie at residues 58–62 (AGQYG) and 75–83 (PIKVSGKCN). Asn83 carries the post-translational modification Asparagine amide.

Belongs to the long (4 C-C) scorpion toxin superfamily. Sodium channel inhibitor family. Alpha subfamily. C-terminal amidation does not appear to play an important role in activity, since the non-amidated recombinant toxin and the native toxin (which is amidated) show similar activities on all sodium channels tested. As to expression, expressed by the venom gland.

It is found in the secreted. Its function is as follows. Alpha toxins bind voltage-independently at site-3 of sodium channels (Nav) and inhibit the inactivation of the activated channels, thereby blocking neuronal transmission. This toxin inhibits inactivation of Nav1.6/SCN8A (EC(50)=3.1 uM) and drosophila DmNav1 (EC(50)=1.17 uM). It also shows a weak inhibition of inactivation on Nav1.2/SCN2A Nav1.3/SCN3A, and Nav1.7/SCN9A. The toxin (1 uM) does not significantly shift the midpoint of activation at the two channels, but induces a significant depolarizing shift in the V(1/2) of inactivation of the channels. The toxin has also been shown to dose-dependently stimulates intracellular signaling in DRG neurons through activation of two kinases (type II protein kinase A (PKA-II) and MAP kinases 1/3 (MAPK1/MAPK3)). Nav1.2/SCN2A is strongly suggested to be the target channel predominantly involved in this activation. In vivo, the toxin induces a dose-dependent thermal hyperalgesia lasting 30-45 minutes. The sequence is that of Sodium channel neurotoxin MeuNaTxalpha-1 from Mesobuthus eupeus (Lesser Asian scorpion).